The sequence spans 142 residues: Putative transcriptional regulatory protein Mevan_1098 (142 aa).

It belongs to the Tfx family.

Putative transcriptional regulator. This Methanococcus vannielii (strain ATCC 35089 / DSM 1224 / JCM 13029 / OCM 148 / SB) protein is Putative transcriptional regulatory protein Mevan_1098.